Reading from the N-terminus, the 193-residue chain is V-type sodium ATPase subunit E (193 aa).

The protein belongs to the V-ATPase E subunit family. Post-translationally, the N-terminus is blocked.

Functionally, involved in ATP-driven sodium extrusion. The polypeptide is V-type sodium ATPase subunit E (ntpE) (Enterococcus hirae (strain ATCC 9790 / DSM 20160 / JCM 8729 / LMG 6399 / NBRC 3181 / NCIMB 6459 / NCDO 1258 / NCTC 12367 / WDCM 00089 / R)).